The chain runs to 1741 residues: S-layer protein (1741 aa).

Residues 894–904 show a composition bias toward polar residues; it reads SFTSDSANGSG. Residues 894-913 are disordered; that stretch reads SFTSDSANGSGHSVEGGTGD.

In terms of processing, glycosylated.

The protein resides in the secreted. The protein localises to the cell wall. It is found in the S-layer. In terms of biological role, S-layer protein. The S-layer is a paracrystalline mono-layered assembly of proteins which coats the surface of bacteria. Under laboratory conditions, has a supportive but not a critical role in the function of the cyanobacterium. Shows no apparent hemolytic activity against sheep erythrocytes, however, a slight hemolytic activity is detected during the conformational change caused by the rebinding of Ca(2+). The chain is S-layer protein from Synechocystis sp. (strain ATCC 27184 / PCC 6803 / Kazusa).